Reading from the N-terminus, the 389-residue chain is Sulfate adenylyltransferase (389 aa).

The protein belongs to the sulfate adenylyltransferase family.

The catalysed reaction is sulfate + ATP + H(+) = adenosine 5'-phosphosulfate + diphosphate. It participates in sulfur metabolism; hydrogen sulfide biosynthesis; sulfite from sulfate: step 1/3. This is Sulfate adenylyltransferase from Desulforamulus reducens (strain ATCC BAA-1160 / DSM 100696 / MI-1) (Desulfotomaculum reducens).